Reading from the N-terminus, the 154-residue chain is Large-conductance mechanosensitive channel (154 aa).

3 helical membrane-spanning segments follow: residues 14-34 (VMDL…VTSL), 38-58 (IITP…LFIN), and 81-101 (GLFL…FIVI).

It belongs to the MscL family. As to quaternary structure, homopentamer.

It localises to the cell membrane. Channel that opens in response to stretch forces in the membrane lipid bilayer. May participate in the regulation of osmotic pressure changes within the cell. This chain is Large-conductance mechanosensitive channel, found in Brevibacillus brevis (strain 47 / JCM 6285 / NBRC 100599).